Here is a 118-residue protein sequence, read N- to C-terminus: Small ribosomal subunit protein uS13 (118 aa).

The interval 92 to 118 (RRSLPVRGQRTKTNARTRKGPRKPIKK) is disordered.

It belongs to the universal ribosomal protein uS13 family. Part of the 30S ribosomal subunit. Forms a loose heterodimer with protein S19. Forms two bridges to the 50S subunit in the 70S ribosome.

Functionally, located at the top of the head of the 30S subunit, it contacts several helices of the 16S rRNA. In the 70S ribosome it contacts the 23S rRNA (bridge B1a) and protein L5 of the 50S subunit (bridge B1b), connecting the 2 subunits; these bridges are implicated in subunit movement. Contacts the tRNAs in the A and P-sites. The chain is Small ribosomal subunit protein uS13 from Acinetobacter baumannii (strain AB307-0294).